The following is a 217-amino-acid chain: MNATTAPLPYSAARLHELAQLLIGNIRELAQAGWTPATSSNFSHRLDEQHAAITVSGRDKGRLVEEDIMVVDFDGQPVGRPLRPSAETLLHTQLYRRFPEIGCVLHTHSPVQTIASRLYAGSGVIRLEGYELLKAFEGNTTHETAVDVLVFANTQDMQVLAAQVEALLDKQSMWGYLIEGHGLYAWGRNMAEARRHLEAFEFLLHCELELLKLRSPR.

Positions 106 and 108 each coordinate Zn(2+).

Belongs to the aldolase class II family. MtnB subfamily. It depends on Zn(2+) as a cofactor.

It carries out the reaction 5-(methylsulfanyl)-D-ribulose 1-phosphate = 5-methylsulfanyl-2,3-dioxopentyl phosphate + H2O. Its pathway is amino-acid biosynthesis; L-methionine biosynthesis via salvage pathway; L-methionine from S-methyl-5-thio-alpha-D-ribose 1-phosphate: step 2/6. In terms of biological role, catalyzes the dehydration of methylthioribulose-1-phosphate (MTRu-1-P) into 2,3-diketo-5-methylthiopentyl-1-phosphate (DK-MTP-1-P). In Xanthomonas campestris pv. campestris (strain B100), this protein is Methylthioribulose-1-phosphate dehydratase.